We begin with the raw amino-acid sequence, 411 residues long: POU domain, class 4, transcription factor 2 (411 aa).

Positions 29-95 (LHSASPGSSA…SEAMRRACLP (67 aa)) are disordered. The span at 31-52 (SASPGSSAPAAPSASSPSSSSN) shows a compositional bias: low complexity. Gly residues-rich tracts occupy residues 53 to 68 (AGGGGGGGGGGGGGGR) and 76 to 86 (GSGGSGGGGGS). Residues 93-239 (CLPTPPSNIF…MHQAALSMAH (147 aa)) form a required for transcriptional activation region. The POU-IV box motif lies at 112 to 121 (RAEALAAVDI). The segment covering 154-168 (SAASSSSVPISHPSA) has biased composition (low complexity). A disordered region spans residues 154–190 (SAASSSSVPISHPSALAGTHHHHHHHHHHHHQPHQAL). Residues 172–186 (THHHHHHHHHHHHQP) show a composition bias toward basic residues. The short motif at 173-187 (HHHHHHHHHHHHQPH) is the Nuclear speckle targeting signal element. A required for DNA-binding and transcriptional repression region spans residues 240 to 411 (AHGLPSHMGC…QKRMKYSAGI (172 aa)). The region spanning 252–329 (DVDADPRDLE…ILQAWLEEAE (78 aa)) is the POU-specific domain. Positions 347-406 (KKRKRTSIAAPEKRSLEAYFAIQPRPSSEKIAAIAEKLDLKKNVVRVWFCNQRQKQKRMK) form a DNA-binding region, homeobox.

It belongs to the POU transcription factor family. Class-4 subfamily. Isoform 2: Interacts with POU4F1 isoform 1; this interaction inhibits both POU4F1 DNA-binding and transcriptional activities. Isoform 2: Interacts (C-terminus) with ESR1 (via DNA-binding domain); this interaction increases the estrogen receptor ESR1 transcriptional activity in a DNA- and ligand 17-beta-estradiol-independent manner. Isoform 2: Interacts (via C-terminus) with TP53 (via N-terminus). Interacts with DLX1 (via homeobox DNA-binding domain); this interaction suppresses DLX1-mediated transcriptional activity in postnatal retina enhancing retinal ganglion cell (RGC) differentiation. Interacts with DLX2 (via homeobox DNA-binding domain); this interaction enhances RGC differentiation. Isoform 1: Interacts (via C-terminus) with ISL1 (via C-terminus). Isoform 1: Interacts with ISL2. Isoform 1: Interacts with LHX2. Expressed in retinal ganglion cells (RGCs). Expressed in mature osteoclasts. Expressed in cells of layers of the superior colliculus and the adjacent periaqueductal gray (at protein level). Expressed in the brain, peripheral sensory nervous system and retina. Expressed in the optical, intermediate, and deep gray areas of the superior colliculus, the dorsal column of the mesencephalic and pontine central gray, and the lateral interpeduncular nucleus of the brain. Expressed predominantly in postmitotic, terminally differentiated neurons. Expressed in ganglion cell layer (GCL) of the retina.

Its subcellular location is the nucleus. It localises to the nucleus speckle. The protein localises to the cytoplasm. Functionally, tissue-specific DNA-binding transcription factor involved in the development and differentiation of target cells. Functions either as activator or repressor by modulating the rate of target gene transcription through RNA polymerase II enzyme in a promoter-dependent manner. Binds to the consensus octamer motif 5'-AT[A/T]A[T/A]T[A/T]A-3' of promoter of target genes. Plays a fundamental role in the gene regulatory network essential for retinal ganglion cell (RGC) differentiation. Binds to an octamer site to form a ternary complex with ISL1; cooperates positively with ISL1 and ISL2 to potentiate transcriptional activation of RGC target genes being involved in RGC fate commitment in the developing retina and RGC axon formation and pathfinding. Inhibits DLX1 and DLX2 transcriptional activities preventing DLX1- and DLX2-mediated ability to promote amacrine cell fate specification. In cooperation with TP53 potentiates transcriptional activation of BAX promoter activity increasing neuronal cell apoptosis. Negatively regulates BAX promoter activity in the absence of TP53. Acts as a transcriptional coactivator via its interaction with the transcription factor ESR1 by enhancing its effect on estrogen response element (ERE)-containing promoter. Antagonizes the transcriptional stimulatory activity of POU4F1 by preventing its binding to an octamer motif. Involved in TNFSF11-mediated terminal osteoclast differentiation. This is POU domain, class 4, transcription factor 2 from Mus musculus (Mouse).